The primary structure comprises 160 residues: Phosphopantetheine adenylyltransferase (160 aa).

Position 9 (Ser9) interacts with substrate. ATP-binding positions include 9–10 (SF) and His17. Substrate is bound by residues Lys41, Val73, and Lys87. ATP contacts are provided by residues 88-90 (GLR), Glu98, and 122-128 (YSFVSSS).

The protein belongs to the bacterial CoaD family. Homohexamer. Requires Mg(2+) as cofactor.

The protein resides in the cytoplasm. It carries out the reaction (R)-4'-phosphopantetheine + ATP + H(+) = 3'-dephospho-CoA + diphosphate. It functions in the pathway cofactor biosynthesis; coenzyme A biosynthesis; CoA from (R)-pantothenate: step 4/5. In terms of biological role, reversibly transfers an adenylyl group from ATP to 4'-phosphopantetheine, yielding dephospho-CoA (dPCoA) and pyrophosphate. This is Phosphopantetheine adenylyltransferase from Mycobacterium leprae (strain TN).